The chain runs to 153 residues: Zinc finger protein GIS2 (153 aa).

7 consecutive CCHC-type zinc fingers follow at residues 4 to 21, 23 to 40, 47 to 64, 65 to 82, 92 to 109, 116 to 133, and 135 to 152; these read KACY…DCDS, RLCY…DCTM, KQCY…ECTV, QRCF…ECPE, VSCY…DCMK, LKCY…DCQN, and RLCY…DCPK.

It is found in the cytoplasm. Functionally, may act in the sexual differentiation pathway. In Saccharomyces cerevisiae (strain ATCC 204508 / S288c) (Baker's yeast), this protein is Zinc finger protein GIS2 (GIS2).